A 333-amino-acid polypeptide reads, in one-letter code: Glyceraldehyde-3-phosphate dehydrogenase (333 aa).

At Ser1 the chain carries N-acetylserine. NAD(+) is bound by residues 10 to 11, Asp31, and Ser118; that span reads RI. D-glyceraldehyde 3-phosphate-binding positions include 147–149, Thr178, 207–208, and Arg230; these read SCT and TG. Cys148 acts as the Nucleophile in catalysis. Residue Asn312 coordinates NAD(+).

This sequence belongs to the glyceraldehyde-3-phosphate dehydrogenase family. As to quaternary structure, homotetramer.

It is found in the cytoplasm. The enzyme catalyses D-glyceraldehyde 3-phosphate + phosphate + NAD(+) = (2R)-3-phospho-glyceroyl phosphate + NADH + H(+). It functions in the pathway carbohydrate degradation; glycolysis; pyruvate from D-glyceraldehyde 3-phosphate: step 1/5. This chain is Glyceraldehyde-3-phosphate dehydrogenase, found in Homarus americanus (American lobster).